Here is a 180-residue protein sequence, read N- to C-terminus: Thioredoxin 3 (180 aa).

Residues M1–L3 lie on the Cytoplasmic side of the membrane. Residues I4–I24 form a helical; Signal-anchor for type II membrane protein membrane-spanning segment. Topologically, residues N25–K180 are lumenal. In terms of domain architecture, Thioredoxin spans S29–L176. Residues C99 and C102 each act as nucleophile in the active site. A disulfide bridge connects residues C99 and C102.

The protein belongs to the thioredoxin family. Post-translationally, the disulfide bond between Cys-99 and Cys-102 acts as a redox-active center and is reduced by thioredoxin reductase TRXR.

The protein resides in the endoplasmic reticulum membrane. Its function is as follows. Participates in various redox reactions through the reversible oxidation of its active center dithiol to a disulfide and catalyzes dithiol-disulfide exchange reactions. This Plasmodium falciparum (isolate 3D7) protein is Thioredoxin 3.